Reading from the N-terminus, the 144-residue chain is Large ribosomal subunit protein uL11 (144 aa).

The protein belongs to the universal ribosomal protein uL11 family. Part of the ribosomal stalk of the 50S ribosomal subunit. Interacts with L10 and the large rRNA to form the base of the stalk. L10 forms an elongated spine to which L12 dimers bind in a sequential fashion forming a multimeric L10(L12)X complex. Post-translationally, one or more lysine residues are methylated.

In terms of biological role, forms part of the ribosomal stalk which helps the ribosome interact with GTP-bound translation factors. The protein is Large ribosomal subunit protein uL11 of Francisella tularensis subsp. mediasiatica (strain FSC147).